Consider the following 474-residue polypeptide: 6-phospho-beta-glucosidase AscB (474 aa).

The Proton donor role is filled by E180. The active-site Nucleophile is E372.

It belongs to the glycosyl hydrolase 1 family.

The enzyme catalyses 6-phospho-beta-D-glucosyl-(1-&gt;4)-D-glucose + H2O = D-glucose 6-phosphate + D-glucose. Its function is as follows. Can hydrolyze salicin, cellobiose, and probably arbutin. This Escherichia coli (strain K12) protein is 6-phospho-beta-glucosidase AscB (ascB).